The following is a 572-amino-acid chain: MKQSKMLIPTLREVPNDAEVLSHQILLRAGYIRQVAAGIYSYLPLANRVLEKLKTIMREEFEKIDAVEMLMPALLPAELWKESGRYETYGPNLYRLKDRNDRDYILGPTHEETFTELIRDEINSYKRLPLNLYQIQTKYRDEKRSRSGLLRGREFIMKDGYSFHADEASLDQSYRDYEKAYSRIFERCGLEFRAIIGDGGAMGGKDSKEFMAISEIGEDTICYSTESDYAANLEMATSLYTPKKSHETQLDLEKIATPEVGTIAEVANFFEVEPQRIIKSVLFIADEEPVMVLVRGDHDVNDVKLKNFLGADFLDEATEEDARRVLGAGFGSIGPVNVSEDVKIYADLAVQDLANAIVGANEDGYHLTNVNPDRDFQPISYEDLRFVQEGDPSPDGNGVLAFTKGIEIGHIFKLGTRYSDAMGATVLDENGREKSVIMGCYGIGVSRLLSAIVEQNADERGINWPTGIAPFDLHVVQMNVKDEYQTKLSQEVEAMMTEAGYEVLVDDRNERAGVKFADADLIGCPIRITVGKKAVDGVVEVKIKRTGEMLEVRKEELESTLSILMNTTSEVE.

Belongs to the class-II aminoacyl-tRNA synthetase family. ProS type 1 subfamily. In terms of assembly, homodimer.

The protein resides in the cytoplasm. The enzyme catalyses tRNA(Pro) + L-proline + ATP = L-prolyl-tRNA(Pro) + AMP + diphosphate. Catalyzes the attachment of proline to tRNA(Pro) in a two-step reaction: proline is first activated by ATP to form Pro-AMP and then transferred to the acceptor end of tRNA(Pro). As ProRS can inadvertently accommodate and process non-cognate amino acids such as alanine and cysteine, to avoid such errors it has two additional distinct editing activities against alanine. One activity is designated as 'pretransfer' editing and involves the tRNA(Pro)-independent hydrolysis of activated Ala-AMP. The other activity is designated 'posttransfer' editing and involves deacylation of mischarged Ala-tRNA(Pro). The misacylated Cys-tRNA(Pro) is not edited by ProRS. This chain is Proline--tRNA ligase, found in Enterococcus faecalis (strain ATCC 700802 / V583).